A 117-amino-acid polypeptide reads, in one-letter code: Immunoglobulin kappa variable 1-33 (117 aa).

An N-terminal signal peptide occupies residues 1–22 (MDMRVPAQLLGLLLLWLSGARC). The framework-1 stretch occupies residues 23 to 45 (DIQMTQSPSSLSASVGDRVTITC). One can recognise an Ig-like domain in the interval 24 to 117 (IQMTQSPSSL…YYCQQYDNLP (94 aa)). The cysteines at positions 45 and 110 are disulfide-linked. The interval 46-56 (QASQDISNYLN) is complementarity-determining-1. The tract at residues 57 to 71 (WYQQKPGKAPKLLIY) is framework-2. The tract at residues 72–78 (DASNLET) is complementarity-determining-2. The interval 79 to 110 (GVPSRFSGSGSGTDFTFTISSLQPEDIATYYC) is framework-3. Positions 111 to 117 (QQYDNLP) are complementarity-determining-3.

Immunoglobulins are composed of two identical heavy chains and two identical light chains; disulfide-linked.

The protein localises to the secreted. It localises to the cell membrane. In terms of biological role, v region of the variable domain of immunoglobulin light chains that participates in the antigen recognition. Immunoglobulins, also known as antibodies, are membrane-bound or secreted glycoproteins produced by B lymphocytes. In the recognition phase of humoral immunity, the membrane-bound immunoglobulins serve as receptors which, upon binding of a specific antigen, trigger the clonal expansion and differentiation of B lymphocytes into immunoglobulins-secreting plasma cells. Secreted immunoglobulins mediate the effector phase of humoral immunity, which results in the elimination of bound antigens. The antigen binding site is formed by the variable domain of one heavy chain, together with that of its associated light chain. Thus, each immunoglobulin has two antigen binding sites with remarkable affinity for a particular antigen. The variable domains are assembled by a process called V-(D)-J rearrangement and can then be subjected to somatic hypermutations which, after exposure to antigen and selection, allow affinity maturation for a particular antigen. The polypeptide is Immunoglobulin kappa variable 1-33 (Homo sapiens (Human)).